A 402-amino-acid polypeptide reads, in one-letter code: Diaminopimelate decarboxylase (402 aa).

An N6-(pyridoxal phosphate)lysine modification is found at Lys-61. Pyridoxal 5'-phosphate-binding positions include Gly-233 and 269-272 (EPGR). Arg-272, Arg-304, Tyr-308, Glu-334, and Tyr-360 together coordinate substrate. A pyridoxal 5'-phosphate-binding site is contributed by Tyr-360.

Belongs to the Orn/Lys/Arg decarboxylase class-II family. LysA subfamily. In terms of assembly, homodimer. Requires pyridoxal 5'-phosphate as cofactor.

The catalysed reaction is meso-2,6-diaminopimelate + H(+) = L-lysine + CO2. It participates in amino-acid biosynthesis; L-lysine biosynthesis via DAP pathway; L-lysine from DL-2,6-diaminopimelate: step 1/1. Its function is as follows. Specifically catalyzes the decarboxylation of meso-diaminopimelate (meso-DAP) to L-lysine. The protein is Diaminopimelate decarboxylase of Thermoplasma acidophilum (strain ATCC 25905 / DSM 1728 / JCM 9062 / NBRC 15155 / AMRC-C165).